The chain runs to 198 residues: Recombination protein RecR (198 aa).

Residues 57 to 72 form a C4-type zinc finger; sequence CRQCRTLSEEELCPQC. Positions 80–174 constitute a Toprim domain; that stretch reads SLLCVVEGPL…TLSRIAHGVP (95 aa).

It belongs to the RecR family.

May play a role in DNA repair. It seems to be involved in an RecBC-independent recombinational process of DNA repair. It may act with RecF and RecO. This is Recombination protein RecR from Pseudomonas paraeruginosa (strain DSM 24068 / PA7) (Pseudomonas aeruginosa (strain PA7)).